Consider the following 902-residue polypeptide: Ephrin type-B receptor 1-B (902 aa).

The Eph LBD domain occupies 1-119 (HRVYVEMRFT…FFKKCPSVVQ (119 aa)). The Extracellular segment spans residues 1–459 (HRVYVEMRFT…KSELREQLPL (459 aa)). Fibronectin type-III domains follow at residues 240-350 (VPSG…TNQA) and 351-448 (APSS…TEED). N-linked (GlcNAc...) asparagine glycosylation is found at asparagine 252, asparagine 344, and asparagine 398. A helical membrane pass occupies residues 460 to 480 (IAGSAAAGVVFIVSLVAISIV). The Cytoplasmic segment spans residues 481–902 (CSRKRTYSKE…QISQSPTSIA (422 aa)). The Protein kinase domain occupies 537-800 (VKIEEVIGAG…EIVNTLDKMI (264 aa)). ATP is bound by residues 543–551 (IGAGEFGEV) and lysine 569. Aspartate 662 (proton acceptor) is an active-site residue. Positions 829–893 (SAFTSVDDWL…LNSIQSMRVQ (65 aa)) constitute an SAM domain. The PDZ-binding motif lies at 900–902 (SIA).

This sequence belongs to the protein kinase superfamily. Tyr protein kinase family. Ephrin receptor subfamily. Heterotetramer upon binding of the ligand. The heterotetramer is composed of an ephrin dimer and a receptor dimer. Oligomerization is probably required to induce biological responses. In terms of processing, phosphorylated. Autophosphorylation is stimulated by ligands. As to expression, expressed in the embryo in the brain and spinal cord and in the first and fourth visceral arches. Most abundant in adult brain, with lower levels in eye, heart, ovary, oviduct, lung and pharynx.

The protein localises to the cell membrane. It is found in the early endosome membrane. The protein resides in the cell projection. It localises to the dendrite. It carries out the reaction L-tyrosyl-[protein] + ATP = O-phospho-L-tyrosyl-[protein] + ADP + H(+). Its function is as follows. Receptor tyrosine kinase which binds promiscuously transmembrane ephrin-B family ligands residing on adjacent cells, leading to contact-dependent bidirectional signaling into neighboring cells. The signaling pathway downstream of the receptor is referred to as forward signaling while the signaling pathway downstream of the ephrin ligand is referred to as reverse signaling. May play a role in axon guidance during nervous system development. May also play an important redundant role with other ephrin-B receptors in development and maturation of dendritic spines and synapse formation. More generally, may play a role in targeted cell migration and adhesion. Upon activation by ephrin-B ligands activates the MAPK/ERK and the JNK signaling cascades to regulate cell migration and adhesion respectively. This chain is Ephrin type-B receptor 1-B (ephb1-b), found in Xenopus laevis (African clawed frog).